The sequence spans 267 residues: DCN1-like protein 2 (267 aa).

Positions 1 to 48 (MTRKYTKKSSGSTASTTNSTAEIVDLTTSTSSVGKKRKSPDEKAQPIT) are disordered. The span at 8–21 (KSSGSTASTTNSTA) shows a compositional bias: low complexity. Residues 75–262 (HYTYLYTYIF…LLDQFSEWVQ (188 aa)) form the DCUN1 domain.

The chain is DCN1-like protein 2 from Dictyostelium discoideum (Social amoeba).